The following is a 56-amino-acid chain: Large ribosomal subunit protein bL33 (56 aa).

It belongs to the bacterial ribosomal protein bL33 family.

This chain is Large ribosomal subunit protein bL33, found in Rickettsia africae (strain ESF-5).